Reading from the N-terminus, the 350-residue chain is tRNA-splicing endonuclease (350 aa).

Active-site residues include Tyr-286, His-297, and Lys-328.

Belongs to the tRNA-intron endonuclease family. Archaeal long subfamily. Homodimer.

The enzyme catalyses pretRNA = a 3'-half-tRNA molecule with a 5'-OH end + a 5'-half-tRNA molecule with a 2',3'-cyclic phosphate end + an intron with a 2',3'-cyclic phosphate and a 5'-hydroxyl terminus.. Endonuclease that removes tRNA introns. Cleaves pre-tRNA at the 5'- and 3'-splice sites to release the intron. The products are an intron and two tRNA half-molecules bearing 2',3' cyclic phosphate and 5'-OH termini. Recognizes a pseudosymmetric substrate in which 2 bulged loops of 3 bases are separated by a stem of 4 bp. The sequence is that of tRNA-splicing endonuclease from Methanosarcina barkeri (strain Fusaro / DSM 804).